The primary structure comprises 350 residues: Putative ankyrin repeat protein RBE_0589 (350 aa).

ANK repeat units follow at residues 81–110 (DGFT…NPNI), 114–151 (DIVT…EPTD), and 153–182 (SGWT…NLDI).

This Rickettsia bellii (strain RML369-C) protein is Putative ankyrin repeat protein RBE_0589.